Consider the following 363-residue polypeptide: Chorismate synthase (363 aa).

Positions 48 and 54 each coordinate NADP(+). FMN-binding positions include 131–133 (RSS), 244–245 (NA), G288, 303–307 (KPTSS), and R329.

This sequence belongs to the chorismate synthase family. As to quaternary structure, homotetramer. The cofactor is FMNH2.

The catalysed reaction is 5-O-(1-carboxyvinyl)-3-phosphoshikimate = chorismate + phosphate. It functions in the pathway metabolic intermediate biosynthesis; chorismate biosynthesis; chorismate from D-erythrose 4-phosphate and phosphoenolpyruvate: step 7/7. In terms of biological role, catalyzes the anti-1,4-elimination of the C-3 phosphate and the C-6 proR hydrogen from 5-enolpyruvylshikimate-3-phosphate (EPSP) to yield chorismate, which is the branch point compound that serves as the starting substrate for the three terminal pathways of aromatic amino acid biosynthesis. This reaction introduces a second double bond into the aromatic ring system. The protein is Chorismate synthase of Maricaulis maris (strain MCS10) (Caulobacter maris).